The sequence spans 208 residues: Uracil phosphoribosyltransferase (208 aa).

5-phospho-alpha-D-ribose 1-diphosphate contacts are provided by residues R78, R103, and 130–138 (DPMLATGGT). Uracil-binding positions include I193 and 198 to 200 (GDA). A 5-phospho-alpha-D-ribose 1-diphosphate-binding site is contributed by D199.

This sequence belongs to the UPRTase family. The cofactor is Mg(2+).

It carries out the reaction UMP + diphosphate = 5-phospho-alpha-D-ribose 1-diphosphate + uracil. It functions in the pathway pyrimidine metabolism; UMP biosynthesis via salvage pathway; UMP from uracil: step 1/1. Allosterically activated by GTP. Functionally, catalyzes the conversion of uracil and 5-phospho-alpha-D-ribose 1-diphosphate (PRPP) to UMP and diphosphate. The sequence is that of Uracil phosphoribosyltransferase from Nitratidesulfovibrio vulgaris (strain DSM 19637 / Miyazaki F) (Desulfovibrio vulgaris).